The primary structure comprises 299 residues: 4-hydroxy-tetrahydrodipicolinate synthase (299 aa).

Thr50 contacts pyruvate. Tyr139 functions as the Proton donor/acceptor in the catalytic mechanism. Residue Lys167 is the Schiff-base intermediate with substrate of the active site. Residue Val209 participates in pyruvate binding.

This sequence belongs to the DapA family. As to quaternary structure, homotetramer; dimer of dimers.

It localises to the cytoplasm. The enzyme catalyses L-aspartate 4-semialdehyde + pyruvate = (2S,4S)-4-hydroxy-2,3,4,5-tetrahydrodipicolinate + H2O + H(+). Its pathway is amino-acid biosynthesis; L-lysine biosynthesis via DAP pathway; (S)-tetrahydrodipicolinate from L-aspartate: step 3/4. In terms of biological role, catalyzes the condensation of (S)-aspartate-beta-semialdehyde [(S)-ASA] and pyruvate to 4-hydroxy-tetrahydrodipicolinate (HTPA). In Synechococcus elongatus (strain ATCC 33912 / PCC 7942 / FACHB-805) (Anacystis nidulans R2), this protein is 4-hydroxy-tetrahydrodipicolinate synthase.